Reading from the N-terminus, the 189-residue chain is Elongation factor P (189 aa).

The protein belongs to the elongation factor P family.

It localises to the cytoplasm. The protein operates within protein biosynthesis; polypeptide chain elongation. Its function is as follows. Involved in peptide bond synthesis. Stimulates efficient translation and peptide-bond synthesis on native or reconstituted 70S ribosomes in vitro. Probably functions indirectly by altering the affinity of the ribosome for aminoacyl-tRNA, thus increasing their reactivity as acceptors for peptidyl transferase. The polypeptide is Elongation factor P (Pseudomonas putida (strain ATCC 700007 / DSM 6899 / JCM 31910 / BCRC 17059 / LMG 24140 / F1)).